Here is a 336-residue protein sequence, read N- to C-terminus: tRNA N6-adenosine threonylcarbamoyltransferase (336 aa).

Histidine 112 and histidine 116 together coordinate Fe cation. Substrate-binding positions include 136-140, aspartate 169, glycine 182, and asparagine 276; that span reads LVSGG. Aspartate 304 is a binding site for Fe cation.

Belongs to the KAE1 / TsaD family. It depends on Fe(2+) as a cofactor.

The protein localises to the cytoplasm. It carries out the reaction L-threonylcarbamoyladenylate + adenosine(37) in tRNA = N(6)-L-threonylcarbamoyladenosine(37) in tRNA + AMP + H(+). Required for the formation of a threonylcarbamoyl group on adenosine at position 37 (t(6)A37) in tRNAs that read codons beginning with adenine. Is involved in the transfer of the threonylcarbamoyl moiety of threonylcarbamoyl-AMP (TC-AMP) to the N6 group of A37, together with TsaE and TsaB. TsaD likely plays a direct catalytic role in this reaction. The polypeptide is tRNA N6-adenosine threonylcarbamoyltransferase (Francisella philomiragia subsp. philomiragia (strain ATCC 25017 / CCUG 19701 / FSC 153 / O#319-036)).